A 627-amino-acid polypeptide reads, in one-letter code: Protein EXECUTER 2, chloroplastic (627 aa).

Disordered stretches follow at residues 1–34 (MSAA…PSAA), 212–277 (PTKG…AKDS), and 308–359 (EAEL…SKSP). The transit peptide at 1 to 45 (MSAATACASPAAARPPLHIPLRSPPSAAHLPSAAASRRASSAACR) directs the protein to the chloroplast. A compositionally biased stretch (low complexity) spans 217–229 (SSASSVSSATAES). Acidic residues-rich tracts occupy residues 308 to 321 (EAEL…ELVQ) and 331 to 353 (SLED…SDSA).

It localises to the plastid. The protein resides in the chloroplast. Its function is as follows. Together with EX1, enables higher plants to perceive singlet oxygen as a stress signal in plastid that activates a genetically determined nuclear stress response program which triggers a programmed cell death (PCD). This transfer of singlet oxygen-induced stress-related signals from the plastid to the nucleus that triggers genetically controlled PCD pathway is unique to photosynthetic eukaryotes and operates under mild stress conditions, impeding photosystem II (PSII) without causing photooxidative damage of the plant. The sequence is that of Protein EXECUTER 2, chloroplastic from Oryza sativa subsp. japonica (Rice).